A 453-amino-acid polypeptide reads, in one-letter code: MNIVILAAGTGKRMRSALPKVLHPLAGRPLLSHVIDTARTLQPSRLVVVVGHGAEQVQAAVAAPDVQFAVQAEQLGTGHAVRQALPLLDPAQPTLVLYGDVPLTRASTLQRLVDAARDGRYGILTVTLDDPTGYGRIVRDASGFVTRIVEQKDASPEELKIAEINTGIIVTPTAQLSMWLGALKNENAQGEYYLTDVVELAIEAGFEVVTSQPDEEWETLGVNSKAQLAELERIHQRNVADALLVDGVTLADPARVDVRGTLRCGRDVSIDVNCVFEGNVTLADNVTIGANCVIRNASVGAGTRIDAFTHIDGAELGANTVIGPYARLRPGAQLADEAHVGNFVEVKNAVIGHGSKANHLTYIGDADIGARVNIGAGTITCNYDGANKFRTVIEDDVFVGSDTQLVAPVRVGRGVTIAAGTTIWKDVAEGVLALNEKTQTAKSGYVRPVKKKS.

A pyrophosphorylase region spans residues 1-225 (MNIVILAAGT…EWETLGVNSK (225 aa)). UDP-N-acetyl-alpha-D-glucosamine-binding positions include 6-9 (LAAG), Lys-20, Gln-71, 76-77 (GT), 98-100 (YGD), Gly-135, Glu-150, Asn-165, and Asn-223. Asp-100 lines the Mg(2+) pocket. Position 223 (Asn-223) interacts with Mg(2+). Residues 226–246 (AQLAELERIHQRNVADALLVD) are linker. An N-acetyltransferase region spans residues 247-453 (GVTLADPARV…GYVRPVKKKS (207 aa)). UDP-N-acetyl-alpha-D-glucosamine contacts are provided by Arg-329 and Lys-347. Residue His-359 is the Proton acceptor of the active site. UDP-N-acetyl-alpha-D-glucosamine is bound by residues Tyr-362 and Asn-373. Residues Ala-376, 382–383 (NY), Ser-401, and Ala-419 each bind acetyl-CoA.

It in the N-terminal section; belongs to the N-acetylglucosamine-1-phosphate uridyltransferase family. The protein in the C-terminal section; belongs to the transferase hexapeptide repeat family. Homotrimer. It depends on Mg(2+) as a cofactor.

The protein localises to the cytoplasm. It catalyses the reaction alpha-D-glucosamine 1-phosphate + acetyl-CoA = N-acetyl-alpha-D-glucosamine 1-phosphate + CoA + H(+). The enzyme catalyses N-acetyl-alpha-D-glucosamine 1-phosphate + UTP + H(+) = UDP-N-acetyl-alpha-D-glucosamine + diphosphate. The protein operates within nucleotide-sugar biosynthesis; UDP-N-acetyl-alpha-D-glucosamine biosynthesis; N-acetyl-alpha-D-glucosamine 1-phosphate from alpha-D-glucosamine 6-phosphate (route II): step 2/2. Its pathway is nucleotide-sugar biosynthesis; UDP-N-acetyl-alpha-D-glucosamine biosynthesis; UDP-N-acetyl-alpha-D-glucosamine from N-acetyl-alpha-D-glucosamine 1-phosphate: step 1/1. It functions in the pathway bacterial outer membrane biogenesis; LPS lipid A biosynthesis. Catalyzes the last two sequential reactions in the de novo biosynthetic pathway for UDP-N-acetylglucosamine (UDP-GlcNAc). The C-terminal domain catalyzes the transfer of acetyl group from acetyl coenzyme A to glucosamine-1-phosphate (GlcN-1-P) to produce N-acetylglucosamine-1-phosphate (GlcNAc-1-P), which is converted into UDP-GlcNAc by the transfer of uridine 5-monophosphate (from uridine 5-triphosphate), a reaction catalyzed by the N-terminal domain. This Burkholderia orbicola (strain MC0-3) protein is Bifunctional protein GlmU.